Here is a 343-residue protein sequence, read N- to C-terminus: S-adenosylmethionine:tRNA ribosyltransferase-isomerase (343 aa).

This sequence belongs to the QueA family. As to quaternary structure, monomer.

It localises to the cytoplasm. The enzyme catalyses 7-aminomethyl-7-carbaguanosine(34) in tRNA + S-adenosyl-L-methionine = epoxyqueuosine(34) in tRNA + adenine + L-methionine + 2 H(+). It functions in the pathway tRNA modification; tRNA-queuosine biosynthesis. Functionally, transfers and isomerizes the ribose moiety from AdoMet to the 7-aminomethyl group of 7-deazaguanine (preQ1-tRNA) to give epoxyqueuosine (oQ-tRNA). The chain is S-adenosylmethionine:tRNA ribosyltransferase-isomerase from Dehalococcoides mccartyi (strain CBDB1).